Consider the following 416-residue polypeptide: PRKCA-binding protein (416 aa).

Residues 22 to 105 (KVTLQKDAQN…EVTIHYNKLQ (84 aa)) form the PDZ domain. The Zn(2+) site is built by Cys-44 and Cys-46. At Thr-82 the chain carries Phosphothreonine. The region spanning 144-357 (LCNDGLVKRL…CYAVLQDADV (214 aa)) is the AH domain. The disordered stretch occupies residues 373–416 (PNQGSFTDGEEEDEEEEDGAAREVSKDACGATGPTDKGGSWCDS). The span at 380–390 (DGEEEDEEEED) shows a compositional bias: acidic residues. Cys-414 carries S-palmitoyl cysteine; by DHHC8 lipidation.

Monomer and homodimer. Interacts with CXADR. Interacts presynaptically with the glutamate receptors GRIA2, GRIA3, GRIK3, isoform 3 of GRIA4, isoform A of GRM4, GRM7 and GRM8; with NAPA and NAPB; and with BTG2. The interaction with NAPA and NAPB disrupts the interaction with GRIA2, conducting to the internalization of GRIA2. Interacts with PRKCA; with the amine transporters SLC6A2 and SLC6A3; with the channels ASIC1 and ASIC2; with the GTP-binding proteins ARF1 and ARF3; with the ephrin receptor tyrosine kinases EPHA7, EPHB1 and EPHB2; with ERBB2 and through its PDZ domain with the C-terminal tail of PRLHR. Interacts with UNC5A. Interacts (via AH domain) with NCS1/FREQ; in a calcium-dependent manner. Interacts with F-actin and associates with the ARP2/3 complex. Interacts (via PDZ domain) with ARF1 (activated); the interaction blocks Arp2/3 complex inhibition. Interacts with SORCS3. Phosphorylation at Thr-82 appears to inhibit the interaction with AMPA receptors. Phosphorylated on tyrosine residues by EPHB2 and on serine or threonine residues by PKC. In terms of processing, palmitoylation on Cys-414 is essential for long-term synaptic depression (LTD). Expressed in all tissues examined, with highest levels in brain and testes and lowest levels in lung.

It is found in the cytoplasm. The protein resides in the perinuclear region. Its subcellular location is the membrane. The protein localises to the postsynaptic density. It localises to the synapse. It is found in the synaptosome. The protein resides in the cytoskeleton. Probable adapter protein that bind to and organize the subcellular localization of a variety of membrane proteins containing some PDZ recognition sequence. Involved in the clustering of various receptors, possibly by acting at the receptor internalization level. Plays a role in synaptic plasticity by regulating the trafficking and internalization of AMPA receptors. May be regulated upon PRKCA activation. May regulate ASIC1/ASIC3 channel. Regulates actin polymerization by inhibiting the actin-nucleating activity of the Arp2/3 complex; the function is competitive with nucleation promoting factors and is linked to neuronal morphology regulation and AMPA receptor (AMPAR) endocytosis. Via interaction with the Arp2/3 complex involved in regulation of synaptic plasicity of excitatory synapses and required for spine shrinkage during long-term depression (LTD). Involved in regulation of astrocyte morphology, antagonistic to Arp2/3 complex activator WASL/N-WASP function. In Mus musculus (Mouse), this protein is PRKCA-binding protein (Pick1).